Consider the following 130-residue polypeptide: Small ribosomal subunit protein uS9 (130 aa).

Residues 98–130 (LKRAGLLTRDPRMKERKKPGLKKARRSPQFSKR) are disordered. Positions 111–130 (KERKKPGLKKARRSPQFSKR) are enriched in basic residues.

It belongs to the universal ribosomal protein uS9 family.

The polypeptide is Small ribosomal subunit protein uS9 (Staphylococcus epidermidis (strain ATCC 35984 / DSM 28319 / BCRC 17069 / CCUG 31568 / BM 3577 / RP62A)).